Reading from the N-terminus, the 37-residue chain is Large ribosomal subunit protein bL36 (37 aa).

This sequence belongs to the bacterial ribosomal protein bL36 family.

The protein is Large ribosomal subunit protein bL36 of Sulfurihydrogenibium sp. (strain YO3AOP1).